A 695-amino-acid chain; its full sequence is UvrABC system protein B (695 aa).

A Helicase ATP-binding domain is found at 25–176; that stretch reads KSISEGHRFQ…NQRDVLRDLA (152 aa). 38–45 provides a ligand contact to ATP; sequence GATGTGKT. The Beta-hairpin motif lies at 91–114; the sequence is YYDYYQPEAYVPSTDTYIAKSSSI. In terms of domain architecture, Helicase C-terminal spans 454 to 617; that stretch reads LLGEIYLRLE…ITPKPIVKKN (164 aa). Residues 652–687 form the UVR domain; sequence PELIGQLELKMKEAAKNLEFEEAAQLRDRIKKLRQR.

Belongs to the UvrB family. Forms a heterotetramer with UvrA during the search for lesions. Interacts with UvrC in an incision complex.

The protein resides in the cytoplasm. In terms of biological role, the UvrABC repair system catalyzes the recognition and processing of DNA lesions. A damage recognition complex composed of 2 UvrA and 2 UvrB subunits scans DNA for abnormalities. Upon binding of the UvrA(2)B(2) complex to a putative damaged site, the DNA wraps around one UvrB monomer. DNA wrap is dependent on ATP binding by UvrB and probably causes local melting of the DNA helix, facilitating insertion of UvrB beta-hairpin between the DNA strands. Then UvrB probes one DNA strand for the presence of a lesion. If a lesion is found the UvrA subunits dissociate and the UvrB-DNA preincision complex is formed. This complex is subsequently bound by UvrC and the second UvrB is released. If no lesion is found, the DNA wraps around the other UvrB subunit that will check the other stand for damage. The protein is UvrABC system protein B of Synechococcus sp. (strain JA-2-3B'a(2-13)) (Cyanobacteria bacterium Yellowstone B-Prime).